Here is a 520-residue protein sequence, read N- to C-terminus: Laccase-2 (520 aa).

Positions 1-19 are cleaved as a signal peptide; sequence MRFSNAFVLVAACISSVLA. Plastocyanin-like domains follow at residues 21-145, 157-305, and 375-488; these read TKTF…FVVY, VDDE…LTLA, and TVPV…FAEA. The Cu cation site is built by histidine 82 and histidine 84. 2 disulfides stabilise this stretch: cysteine 103/cysteine 509 and cysteine 135/cysteine 229. The N-linked (GlcNAc...) asparagine glycan is linked to asparagine 108. Residues histidine 127 and histidine 129 each coordinate Cu cation. N-linked (GlcNAc...) asparagine glycans are attached at residues asparagine 241 and asparagine 299. The Cu cation site is built by histidine 417, histidine 420, histidine 422, histidine 470, cysteine 471, histidine 472, and histidine 476. N-linked (GlcNAc...) asparagine glycosylation occurs at asparagine 492.

The protein belongs to the multicopper oxidase family. It depends on Cu cation as a cofactor.

The protein localises to the secreted. It catalyses the reaction 4 hydroquinone + O2 = 4 benzosemiquinone + 2 H2O. Functionally, lignin degradation and detoxification of lignin-derived products. The protein is Laccase-2 (lcc2) of Agaricus bisporus (White button mushroom).